We begin with the raw amino-acid sequence, 352 residues long: UPF0324 membrane protein blr3189 (352 aa).

11 helical membrane passes run 21–43, 53–71, 88–110, 114–136, 143–165, 175–197, 204–226, 236–253, 265–284, 294–316, and 329–351; these read IAAL…LLER, YVEA…RSFW, LLEV…ASGI, ASIA…LLGL, LIAC…IIGA, SFTA…LLQL, ILAG…AGLV, LMRV…SLVA, VGFF…LATL, VVGP…LGLG, and VTAA…VHWF.

This sequence belongs to the UPF0324 family.

It localises to the cell membrane. The protein is UPF0324 membrane protein blr3189 of Bradyrhizobium diazoefficiens (strain JCM 10833 / BCRC 13528 / IAM 13628 / NBRC 14792 / USDA 110).